A 569-amino-acid polypeptide reads, in one-letter code: Aspartic proteinase 3 (569 aa).

The first 21 residues, 1–21, serve as a signal peptide directing secretion; it reads MKLKTVRSAVLSSLFASQVLG. A propeptide spanning residues 22-67 is cleaved from the precursor; sequence KIIPAANKRDDDSNSKFVKLPFHKLYGDSLENVGSDKKPEVRLLKR. The Peptidase A1 domain occupies 83–475; it reads YSVDLEVGTP…DLENLEISMA (393 aa). N-linked (GlcNAc...) asparagine glycosylation is present at N95. D101 is an active-site residue. N203, N232, N242, N245, N299, and N358 each carry an N-linked (GlcNAc...) asparagine glycan. Residue D371 is part of the active site. 3 N-linked (GlcNAc...) asparagine glycosylation sites follow: N480, N522, and N532. N548 carries the GPI-anchor amidated asparagine lipid modification. A propeptide spans 549–569 (removed in mature form); that stretch reads VGDHIVPSLPLTLISLLFAFI.

Belongs to the peptidase A1 family. In terms of assembly, consists of an alpha and a beta subunit, which are maintained together by a disulfide bond. The zymogen is transported to the periplasm, where the propeptide is removed and the enzyme is further subjected to an internal, autocatalytic cleavage to generate an alpha/beta two-subunit endopeptidase. The proteolytic processing at the cell surface is regulated by the environmental pH. In terms of processing, extensively N-glycosylated.

It is found in the cell membrane. It catalyses the reaction Hydrolyzes various precursor proteins with Arg or Lys in P1, and commonly Arg or Lys also in P2. The P3 amino acid is usually non-polar, but otherwise additional basic amino acids are favorable in both non-prime and prime positions.. In terms of biological role, cleaves proteins C-terminally to mono- and paired-basic residues. Involved in the shedding of a subset of GPI-anchored plasma membrane proteins from the cell surface, including itself, GAS1 and MSB2. May also play a role in the maturation of GPI-mannoproteins associated with the cell wall. Can process the alpha-mating factor precursor. Required for cell wall integrity. This chain is Aspartic proteinase 3 (YPS1), found in Saccharomyces cerevisiae (strain ATCC 204508 / S288c) (Baker's yeast).